The primary structure comprises 412 residues: Multifunctional CCA protein (412 aa).

The ATP site is built by glycine 8 and arginine 11. CTP contacts are provided by glycine 8 and arginine 11. Mg(2+) contacts are provided by aspartate 21 and aspartate 23. The ATP site is built by arginine 91, arginine 137, and arginine 140. Residues arginine 91, arginine 137, and arginine 140 each contribute to the CTP site. One can recognise an HD domain in the interval 225-326; sequence TGIHVMMVID…ADMLQATDAY (102 aa).

It belongs to the tRNA nucleotidyltransferase/poly(A) polymerase family. Bacterial CCA-adding enzyme type 1 subfamily. Monomer. Can also form homodimers and oligomers. Mg(2+) serves as cofactor. Requires Ni(2+) as cofactor.

It catalyses the reaction a tRNA precursor + 2 CTP + ATP = a tRNA with a 3' CCA end + 3 diphosphate. The catalysed reaction is a tRNA with a 3' CCA end + 2 CTP + ATP = a tRNA with a 3' CCACCA end + 3 diphosphate. Catalyzes the addition and repair of the essential 3'-terminal CCA sequence in tRNAs without using a nucleic acid template. Adds these three nucleotides in the order of C, C, and A to the tRNA nucleotide-73, using CTP and ATP as substrates and producing inorganic pyrophosphate. tRNA 3'-terminal CCA addition is required both for tRNA processing and repair. Also involved in tRNA surveillance by mediating tandem CCA addition to generate a CCACCA at the 3' terminus of unstable tRNAs. While stable tRNAs receive only 3'-terminal CCA, unstable tRNAs are marked with CCACCA and rapidly degraded. In Nitrosomonas europaea (strain ATCC 19718 / CIP 103999 / KCTC 2705 / NBRC 14298), this protein is Multifunctional CCA protein.